The following is a 601-amino-acid chain: Elongation factor 4 (601 aa).

The region spanning 6–188 (KNIRNFSIIA…QIIKKIPAPD (183 aa)) is the tr-type G domain. GTP-binding positions include 18 to 23 (DHGKST) and 135 to 138 (NKID).

Belongs to the TRAFAC class translation factor GTPase superfamily. Classic translation factor GTPase family. LepA subfamily.

Its subcellular location is the cell membrane. It carries out the reaction GTP + H2O = GDP + phosphate + H(+). Required for accurate and efficient protein synthesis under certain stress conditions. May act as a fidelity factor of the translation reaction, by catalyzing a one-codon backward translocation of tRNAs on improperly translocated ribosomes. Back-translocation proceeds from a post-translocation (POST) complex to a pre-translocation (PRE) complex, thus giving elongation factor G a second chance to translocate the tRNAs correctly. Binds to ribosomes in a GTP-dependent manner. In Buchnera aphidicola subsp. Schizaphis graminum (strain Sg), this protein is Elongation factor 4.